The sequence spans 249 residues: Inhibitor of growth protein 4 (249 aa).

Positions 25–118 form a coiled coil; the sequence is FQLMRDLDQR…ADLKEKQIES (94 aa). N6-acetyllysine occurs at positions 112, 127, and 129. A disordered region spans residues 115–163; sequence QIESSDYDSSSSKGKKKGRTQKEKKAARARSKGKNSDEEAPKAAQKKLK. The Bipartite nuclear localization signal motif lies at 127-148; sequence KGKKKGRTQKEKKAARARSKGK. Arg133 is subject to Citrulline. Lys146, Lys148, and Lys156 each carry N6-acetyllysine. Arg166 carries the post-translational modification Citrulline. The PHD-type zinc-finger motif lies at 196–245; the sequence is PTYCLCHQVSYGEMIGCDNPDCSIEWFHFACVGLTTKPRGKWFCPRCSQE. Zn(2+) contacts are provided by Cys199, Cys201, Cys212, Cys217, His223, Cys226, Cys239, and Cys242.

Belongs to the ING family. In terms of assembly, homodimer. Component of the HBO1 complex composed of KAT7/HBO1, MEAF6, ING4 or ING5, and one scaffold subunit: complexes containing BRPF scaffold (BRPF1, BRD1/BRPF2 or BRPF3) direct KAT7/HBO1 specificity towards H3K14ac, while complexes containing JADE scaffold (JADE1, JADE2 and JADE3) mediate acetylation of histone H4. Interacts with H3K4me3 and to a lesser extent with H3K4me2, the interaction augments KAT7/HBO1 acetylation activity on H3 tails. Interacts with EP300, RELA and TP53; these interactions may be indirect. Interacts with EGLN1. As to quaternary structure, interacts with BCL2A1. In terms of processing, citrullination by PADI4 within the nuclear localization signal disrupts the interaction with p53 and increases susceptibility to degradation. Isoform 2, isoform 3, isoform 4 and isoform 5 are expressed in the mammary gland, ovary, spleen and muscle. As to expression, expressed in the mammary gland, ovary, spleen and muscle.

It localises to the nucleus. Its function is as follows. Component of HBO1 complexes, which specifically mediate acetylation of histone H3 at 'Lys-14' (H3K14ac), and have reduced activity toward histone H4. Through chromatin acetylation it may function in DNA replication. May inhibit tumor progression by modulating the transcriptional output of signaling pathways which regulate cell proliferation. Can suppress brain tumor angiogenesis through transcriptional repression of RELA/NFKB3 target genes when complexed with RELA. May also specifically suppress loss of contact inhibition elicited by activated oncogenes such as MYC. Represses hypoxia inducible factor's (HIF) activity by interacting with HIF prolyl hydroxylase 2 (EGLN1). Can enhance apoptosis induced by serum starvation in mammary epithelial cell line HC11. The protein is Inhibitor of growth protein 4 (Ing4) of Mus musculus (Mouse).